We begin with the raw amino-acid sequence, 342 residues long: Methylthioribose-1-phosphate isomerase (342 aa).

Substrate is bound by residues 44-46 (RGA), Arg-85, and Gln-192. Catalysis depends on Asp-233, which acts as the Proton donor. 243 to 244 (NK) contacts substrate.

This sequence belongs to the eIF-2B alpha/beta/delta subunits family. MtnA subfamily.

It carries out the reaction 5-(methylsulfanyl)-alpha-D-ribose 1-phosphate = 5-(methylsulfanyl)-D-ribulose 1-phosphate. The protein operates within amino-acid biosynthesis; L-methionine biosynthesis via salvage pathway; L-methionine from S-methyl-5-thio-alpha-D-ribose 1-phosphate: step 1/6. In terms of biological role, catalyzes the interconversion of methylthioribose-1-phosphate (MTR-1-P) into methylthioribulose-1-phosphate (MTRu-1-P). This is Methylthioribose-1-phosphate isomerase from Caldicellulosiruptor saccharolyticus (strain ATCC 43494 / DSM 8903 / Tp8T 6331).